The sequence spans 248 residues: Granzyme-like protein 2 (248 aa).

The signal sequence occupies residues 1-18 (MFLFLIFLVAVLPVNTEG). Residues 19 to 20 (GE) constitute a propeptide, activation peptide. Positions 21–243 (IVWGTESKPH…FIPWIQKTMK (223 aa)) constitute a Peptidase S1 domain. The cysteines at positions 50 and 66 are disulfide-linked. Residues His-65 and Asp-108 each act as charge relay system in the active site. Disulfide bonds link Cys-142-Cys-207 and Cys-172-Cys-186. N-linked (GlcNAc...) asparagine glycans are attached at residues Asn-152 and Asn-180. The active-site Charge relay system is Ser-201.

The protein belongs to the peptidase S1 family. Granzyme subfamily. Duodenum, lung and spleen.

This enzyme is necessary for target cell lysis in cell-mediated immune responses. The sequence is that of Granzyme-like protein 2 from Rattus norvegicus (Rat).